The chain runs to 354 residues: DNA polymerase IV (354 aa).

The region spanning 6–187 (IIHIDCDCFY…LPVTKLHGVG (182 aa)) is the UmuC domain. The Mg(2+) site is built by aspartate 10 and aspartate 105. Glutamate 106 is a catalytic residue.

This sequence belongs to the DNA polymerase type-Y family. As to quaternary structure, monomer. Mg(2+) is required as a cofactor.

The protein localises to the cytoplasm. The enzyme catalyses DNA(n) + a 2'-deoxyribonucleoside 5'-triphosphate = DNA(n+1) + diphosphate. In terms of biological role, poorly processive, error-prone DNA polymerase involved in untargeted mutagenesis. Copies undamaged DNA at stalled replication forks, which arise in vivo from mismatched or misaligned primer ends. These misaligned primers can be extended by PolIV. Exhibits no 3'-5' exonuclease (proofreading) activity. May be involved in translesional synthesis, in conjunction with the beta clamp from PolIII. The protein is DNA polymerase IV of Pseudomonas syringae pv. syringae (strain B728a).